The sequence spans 767 residues: RNA cytosine C(5)-methyltransferase NSUN2 (767 aa).

A disordered region spans residues 1 to 36; the sequence is MGRRSRGRRLQQQQRPEDAEDGAEGGGKRGEAGWEG. Residue lysine 46 forms a Glycyl lysine isopeptide (Lys-Gly) (interchain with G-Cter in SUMO2) linkage. Serine 139 is subject to Phosphoserine; by AURKB. S-adenosyl-L-methionine is bound by residues 184-190, aspartate 215, aspartate 242, and aspartate 268; that span reads CAAPGSK. Cysteine 321 acts as the Nucleophile in catalysis. The segment at 436-481 is disordered; the sequence is NKRQPKLQGKSAETRESTQLSPADLTEGKPTDPSKLESPSFTGTGD. Serine 456 carries the phosphoserine modification. Basic and acidic residues predominate over residues 461–470; that stretch reads TEGKPTDPSK. Residues lysine 464 and lysine 470 each participate in a glycyl lysine isopeptide (Lys-Gly) (interchain with G-Cter in SUMO2) cross-link. Serine 473 bears the Phosphoserine mark. Residues lysine 511 and lysine 516 each participate in a glycyl lysine isopeptide (Lys-Gly) (interchain with G-Cter in SUMO2) cross-link. Residue lysine 586 is modified to N6-acetyllysine; alternate. Lysine 586 is subject to N6-malonyllysine; alternate. Residue lysine 586 forms a Glycyl lysine isopeptide (Lys-Gly) (interchain with G-Cter in SUMO2); alternate linkage. Serine 593 is subject to Phosphoserine. Glycyl lysine isopeptide (Lys-Gly) (interchain with G-Cter in SUMO2) cross-links involve residues lysine 640, lysine 654, and lysine 660. Position 718 is a phosphothreonine (threonine 718). Residues 719–730 are compositionally biased toward polar residues; the sequence is NESAASTGQPDN. The interval 719–767 is disordered; sequence NESAASTGQPDNDVTEGQRAGEPNSPDAEEANSPDVTAGCDPAGVHPPR. 3 positions are modified to phosphoserine: serine 724, serine 743, and serine 751.

This sequence belongs to the class I-like SAM-binding methyltransferase superfamily. RsmB/NOP family. TRM4 subfamily. As to quaternary structure, interacts with NPM1 and NCL during interphase; interaction is disrupted following phosphorylation at Ser-139. In terms of processing, phosphorylated at Ser-139 by AURKB during mitosis, leading to abolish methyltransferase activity and the interaction with NPM1. In terms of tissue distribution, expressed in adult and fetal brain and in lymphoblastoid cells.

It localises to the nucleus. The protein localises to the nucleolus. It is found in the cytoplasm. Its subcellular location is the mitochondrion. The protein resides in the cytoskeleton. It localises to the spindle. The protein localises to the secreted. It is found in the extracellular exosome. It carries out the reaction cytidine(48) in tRNA + S-adenosyl-L-methionine = 5-methylcytidine(48) in tRNA + S-adenosyl-L-homocysteine + H(+). The catalysed reaction is cytidine(49) in tRNA + S-adenosyl-L-methionine = 5-methylcytidine(49) in tRNA + S-adenosyl-L-homocysteine + H(+). The enzyme catalyses cytidine(50) in tRNA + S-adenosyl-L-methionine = 5-methylcytidine(50) in tRNA + S-adenosyl-L-homocysteine + H(+). It catalyses the reaction cytidine(34) in tRNA precursor + S-adenosyl-L-methionine = 5-methylcytidine(34) in tRNA precursor + S-adenosyl-L-homocysteine + H(+). It carries out the reaction a cytidine in mRNA + S-adenosyl-L-methionine = a 5-methylcytidine in mRNA + S-adenosyl-L-homocysteine + H(+). With respect to regulation, inhibited by magnesium ions. Its function is as follows. RNA cytosine C(5)-methyltransferase that methylates cytosine to 5-methylcytosine (m5C) in various RNAs, such as tRNAs, mRNAs and some long non-coding RNAs (lncRNAs). Involved in various processes, such as epidermal stem cell differentiation, testis differentiation and maternal to zygotic transition during early development: acts by increasing protein synthesis; cytosine C(5)-methylation promoting tRNA stability and preventing mRNA decay. Methylates cytosine to 5-methylcytosine (m5C) at positions 34 and 48 of intron-containing tRNA(Leu)(CAA) precursors, and at positions 48, 49 and 50 of tRNA(Gly)(GCC) precursors. tRNA methylation is required generation of RNA fragments derived from tRNAs (tRFs). Also mediates C(5)-methylation of mitochondrial tRNAs. Catalyzes cytosine C(5)-methylation of mRNAs, leading to stabilize them and prevent mRNA decay: mRNA stabilization involves YBX1 that specifically recognizes and binds m5C-modified transcripts. Cytosine C(5)-methylation of mRNAs also regulates mRNA export: methylated transcripts are specifically recognized by THOC4/ALYREF, which mediates mRNA nucleo-cytoplasmic shuttling. Also mediates cytosine C(5)-methylation of non-coding RNAs, such as vault RNAs (vtRNAs), promoting their processing into regulatory small RNAs. Cytosine C(5)-methylation of vtRNA VTRNA1.1 promotes its processing into small-vault RNA4 (svRNA4) and regulates epidermal differentiation. May act downstream of Myc to regulate epidermal cell growth and proliferation. Required for proper spindle assembly and chromosome segregation, independently of its methyltransferase activity. This Homo sapiens (Human) protein is RNA cytosine C(5)-methyltransferase NSUN2.